Here is a 153-residue protein sequence, read N- to C-terminus: Endoribonuclease RegB (153 aa).

Its activity is regulated as follows. Activity is stimulated 10- to 100-fold by host ribosomal protein S1, which also helps confer substrate choice. In terms of biological role, essential to the early nucleolytic processing of a number of T4 messenger RNAs. Specifically cleaves after the GG dinucleotide GGAG within consensus 5'-GGAGRAYARAA-3' (R is a purine and Y is a pyrimidine) sequences found mainly in translation initiation sites. This Enterobacteria phage T4 (Bacteriophage T4) protein is Endoribonuclease RegB (regB).